The sequence spans 187 residues: Troponin I, slow skeletal muscle (187 aa).

At Pro2 the chain carries N-acetylproline. The involved in binding TNC stretch occupies residues Pro2–Arg48. Ser58 carries the post-translational modification Phosphoserine. The involved in binding TNC and actin stretch occupies residues Leu97 to Val118.

Belongs to the troponin I family. As to quaternary structure, binds to actin and tropomyosin.

Its function is as follows. Troponin I is the inhibitory subunit of troponin, the thin filament regulatory complex which confers calcium-sensitivity to striated muscle actomyosin ATPase activity. The polypeptide is Troponin I, slow skeletal muscle (Tnni1) (Rattus norvegicus (Rat)).